The primary structure comprises 232 residues: Cytidylate kinase (232 aa).

The disordered stretch occupies residues 1–21 (MSEDTPLVVAMDGPSGTGKSS). Position 13 to 21 (13 to 21 (GPSGTGKSS)) interacts with ATP.

It belongs to the cytidylate kinase family. Type 1 subfamily.

It is found in the cytoplasm. The enzyme catalyses CMP + ATP = CDP + ADP. It carries out the reaction dCMP + ATP = dCDP + ADP. This is Cytidylate kinase from Nocardia farcinica (strain IFM 10152).